Reading from the N-terminus, the 271-residue chain is Undecaprenyl-diphosphatase (271 aa).

A run of 8 helical transmembrane segments spans residues 5–25 (YALF…FLPV), 45–65 (AATF…AVFW), 86–106 (TLSL…GLAI), 114–134 (LFGP…LIIA), 149–169 (ISYK…WPGF), 189–209 (AAEF…GLDL), 226–246 (VGFI…LALI), and 251–271 (FIPF…VFVA).

This sequence belongs to the UppP family.

It is found in the cell inner membrane. The enzyme catalyses di-trans,octa-cis-undecaprenyl diphosphate + H2O = di-trans,octa-cis-undecaprenyl phosphate + phosphate + H(+). In terms of biological role, catalyzes the dephosphorylation of undecaprenyl diphosphate (UPP). Confers resistance to bacitracin. In Aeromonas hydrophila subsp. hydrophila (strain ATCC 7966 / DSM 30187 / BCRC 13018 / CCUG 14551 / JCM 1027 / KCTC 2358 / NCIMB 9240 / NCTC 8049), this protein is Undecaprenyl-diphosphatase.